A 763-amino-acid chain; its full sequence is Eukaryotic translation initiation factor 3 subunit B (763 aa).

The interval 1-136 (MKNFLPRTLK…LFVECGSMND (136 aa)) is sufficient for interaction with HCR1 and TIF32. A sufficient for interaction with PIC8 region spans residues 28–261 (RNTQLKRSKI…GVTAWGGPNF (234 aa)). Residue S61 is modified to Phosphoserine. Y67 carries the phosphotyrosine modification. Positions 77-162 (QYIVVNGAPV…HRLFLYTMKD (86 aa)) constitute an RRM domain. WD repeat units follow at residues 228-266 (RENW…RLRR), 277-325 (VSPN…LMAT), 373-416 (LKPS…SACT), 484-524 (ELKD…IRFY), 544-589 (IPKT…EKNI), and 605-650 (PTYS…VKED). The residue at position 669 (S669) is a Phosphoserine.

Belongs to the eIF-3 subunit B family. The eukaryotic translation initiation factor 3 (eIF-3) core complex is composed of TIF32, PRT1, NIP1, TIF34 and TIF35. A subcomplex of TIF32, NIP1 and PRT1 mediates the interaction with eIF-1, TIF5/eIF-5 and HCR1. The factors eIF-1, eIF-2, eIF-3, TIF5/eIF-5 and methionyl-tRNAi form a multifactor complex (MFC) that may bind to the 40S ribosome.

The protein localises to the cytoplasm. Functionally, RNA-binding component of the eukaryotic translation initiation factor 3 (eIF-3) complex, which is involved in protein synthesis of a specialized repertoire of mRNAs and, together with other initiation factors, stimulates binding of mRNA and methionyl-tRNAi to the 40S ribosome. The eIF-3 complex specifically targets and initiates translation of a subset of mRNAs involved in cell proliferation. This chain is Eukaryotic translation initiation factor 3 subunit B, found in Saccharomyces cerevisiae (strain ATCC 204508 / S288c) (Baker's yeast).